The following is a 76-amino-acid chain: UPF0346 protein lhv_1069 (76 aa).

This sequence belongs to the UPF0346 family.

This is UPF0346 protein lhv_1069 from Lactobacillus helveticus (strain DPC 4571).